The primary structure comprises 70 residues: Probable protein transport protein Sec61 subunit gamma (70 aa).

Residues 1-39 (MADQIQEILDVPREFLKDGIQFIKKCQKPDRREFIKISQ) are Cytoplasmic-facing. Residues 40-58 (AVGTGFLIMGAVGYLVKLI) traverse the membrane as a helical segment. At 59 to 70 (HIPLNQVLVGGA) the chain is on the extracellular side.

This sequence belongs to the SecE/SEC61-gamma family. Heterotrimeric complex composed of SEC61-alpha, SEC61-beta and SEC61-gamma.

It is found in the endoplasmic reticulum membrane. Necessary for protein translocation in the endoplasmic reticulum. The polypeptide is Probable protein transport protein Sec61 subunit gamma (Neurospora crassa (strain ATCC 24698 / 74-OR23-1A / CBS 708.71 / DSM 1257 / FGSC 987)).